A 692-amino-acid chain; its full sequence is UvrABC system protein C (692 aa).

The GIY-YIG domain maps to 16-95; sequence ETPGVYRFRD…IKEFDPRFNV (80 aa). One can recognise a UVR domain in the interval 208–243; that stretch reads GRYLRRLEREMRAAAEAQEYERAARLRDDIGALRRA. The disordered stretch occupies residues 492-511; sequence GELEEYPGAPTGDDEAPETG.

It belongs to the UvrC family. Interacts with UvrB in an incision complex.

It localises to the cytoplasm. In terms of biological role, the UvrABC repair system catalyzes the recognition and processing of DNA lesions. UvrC both incises the 5' and 3' sides of the lesion. The N-terminal half is responsible for the 3' incision and the C-terminal half is responsible for the 5' incision. This chain is UvrABC system protein C, found in Parafrankia sp. (strain EAN1pec).